Consider the following 368-residue polypeptide: UDP-N-acetylglucosamine--N-acetylmuramyl-(pentapeptide) pyrophosphoryl-undecaprenol N-acetylglucosamine transferase (368 aa).

UDP-N-acetyl-alpha-D-glucosamine contacts are provided by residues 11–13, N123, R164, S188, I250, and Q295; that span reads TGG.

It belongs to the glycosyltransferase 28 family. MurG subfamily.

Its subcellular location is the cell inner membrane. It catalyses the reaction di-trans,octa-cis-undecaprenyl diphospho-N-acetyl-alpha-D-muramoyl-L-alanyl-D-glutamyl-meso-2,6-diaminopimeloyl-D-alanyl-D-alanine + UDP-N-acetyl-alpha-D-glucosamine = di-trans,octa-cis-undecaprenyl diphospho-[N-acetyl-alpha-D-glucosaminyl-(1-&gt;4)]-N-acetyl-alpha-D-muramoyl-L-alanyl-D-glutamyl-meso-2,6-diaminopimeloyl-D-alanyl-D-alanine + UDP + H(+). Its pathway is cell wall biogenesis; peptidoglycan biosynthesis. Cell wall formation. Catalyzes the transfer of a GlcNAc subunit on undecaprenyl-pyrophosphoryl-MurNAc-pentapeptide (lipid intermediate I) to form undecaprenyl-pyrophosphoryl-MurNAc-(pentapeptide)GlcNAc (lipid intermediate II). This is UDP-N-acetylglucosamine--N-acetylmuramyl-(pentapeptide) pyrophosphoryl-undecaprenol N-acetylglucosamine transferase from Solidesulfovibrio magneticus (strain ATCC 700980 / DSM 13731 / RS-1) (Desulfovibrio magneticus).